We begin with the raw amino-acid sequence, 249 residues long: DNA repair protein RecO (249 aa).

This sequence belongs to the RecO family.

Its function is as follows. Involved in DNA repair and RecF pathway recombination. This Polaromonas sp. (strain JS666 / ATCC BAA-500) protein is DNA repair protein RecO.